The sequence spans 77 residues: DNA-directed RNA polymerase subunit Rpo5 (77 aa).

The protein belongs to the archaeal Rpo5/eukaryotic RPB5 RNA polymerase subunit family. Part of the RNA polymerase complex.

Its subcellular location is the cytoplasm. It catalyses the reaction RNA(n) + a ribonucleoside 5'-triphosphate = RNA(n+1) + diphosphate. In terms of biological role, DNA-dependent RNA polymerase (RNAP) catalyzes the transcription of DNA into RNA using the four ribonucleoside triphosphates as substrates. This is DNA-directed RNA polymerase subunit Rpo5 from Methanothermobacter thermautotrophicus (strain ATCC 29096 / DSM 1053 / JCM 10044 / NBRC 100330 / Delta H) (Methanobacterium thermoautotrophicum).